The sequence spans 589 residues: Splicing factor U2af large subunit B (589 aa).

Residues 1–195 (MMSYEGNGDG…KRRSGFDMAP (195 aa)) form a disordered region. Residues 14–27 (STENHNENYISLES) are compositionally biased toward polar residues. Basic and acidic residues-rich tracts occupy residues 29–100 (PFHE…DRQR) and 109–145 (RDRS…DREV). Basic residues-rich tracts occupy residues 146–156 (RHRRRSRSRSR) and 164–188 (RSEH…SKRR). 3 consecutive RRM domains span residues 255-338 (RRVY…RPTD), 375-453 (DRIF…RAIQ), and 494-580 (QVVT…YPED).

It belongs to the splicing factor SR family. Component of the spliceosome. Interacts with SF1 in the nucleus.

It is found in the nucleus. The protein resides in the nucleus speckle. Its function is as follows. Necessary for the splicing of pre-mRNA. The chain is Splicing factor U2af large subunit B from Arabidopsis thaliana (Mouse-ear cress).